We begin with the raw amino-acid sequence, 342 residues long: Holliday junction branch migration complex subunit RuvB (342 aa).

The interval 1 to 179 (MTNILSPEKS…FGIPMRLNFY (179 aa)) is large ATPase domain (RuvB-L). Residues Ile-18, Arg-19, Gly-60, Lys-63, Thr-64, Thr-65, 126–128 (EDF), Arg-169, Tyr-179, and Arg-216 each bind ATP. Residue Thr-64 coordinates Mg(2+). A small ATPAse domain (RuvB-S) region spans residues 180 to 250 (NTEELKKVLN…ISDFGLNRLE (71 aa)). Residues 253–342 (CIGLDSNDYR…HQFNIFNENE (90 aa)) are head domain (RuvB-H). DNA is bound by residues Arg-289, Arg-308, and Arg-313.

This sequence belongs to the RuvB family. Homohexamer. Forms an RuvA(8)-RuvB(12)-Holliday junction (HJ) complex. HJ DNA is sandwiched between 2 RuvA tetramers; dsDNA enters through RuvA and exits via RuvB. An RuvB hexamer assembles on each DNA strand where it exits the tetramer. Each RuvB hexamer is contacted by two RuvA subunits (via domain III) on 2 adjacent RuvB subunits; this complex drives branch migration. In the full resolvosome a probable DNA-RuvA(4)-RuvB(12)-RuvC(2) complex forms which resolves the HJ.

It localises to the cytoplasm. It catalyses the reaction ATP + H2O = ADP + phosphate + H(+). In terms of biological role, the RuvA-RuvB-RuvC complex processes Holliday junction (HJ) DNA during genetic recombination and DNA repair, while the RuvA-RuvB complex plays an important role in the rescue of blocked DNA replication forks via replication fork reversal (RFR). RuvA specifically binds to HJ cruciform DNA, conferring on it an open structure. The RuvB hexamer acts as an ATP-dependent pump, pulling dsDNA into and through the RuvAB complex. RuvB forms 2 homohexamers on either side of HJ DNA bound by 1 or 2 RuvA tetramers; 4 subunits per hexamer contact DNA at a time. Coordinated motions by a converter formed by DNA-disengaged RuvB subunits stimulates ATP hydrolysis and nucleotide exchange. Immobilization of the converter enables RuvB to convert the ATP-contained energy into a lever motion, pulling 2 nucleotides of DNA out of the RuvA tetramer per ATP hydrolyzed, thus driving DNA branch migration. The RuvB motors rotate together with the DNA substrate, which together with the progressing nucleotide cycle form the mechanistic basis for DNA recombination by continuous HJ branch migration. Branch migration allows RuvC to scan DNA until it finds its consensus sequence, where it cleaves and resolves cruciform DNA. This is Holliday junction branch migration complex subunit RuvB from Rickettsia africae (strain ESF-5).